The following is a 1341-amino-acid chain: DNA-directed RNA polymerase subunit beta (1341 aa).

The protein belongs to the RNA polymerase beta chain family. The RNAP catalytic core consists of 2 alpha, 1 beta, 1 beta' and 1 omega subunit. When a sigma factor is associated with the core the holoenzyme is formed, which can initiate transcription.

The catalysed reaction is RNA(n) + a ribonucleoside 5'-triphosphate = RNA(n+1) + diphosphate. DNA-dependent RNA polymerase catalyzes the transcription of DNA into RNA using the four ribonucleoside triphosphates as substrates. The chain is DNA-directed RNA polymerase subunit beta from Vibrio cholerae serotype O1 (strain ATCC 39315 / El Tor Inaba N16961).